A 326-amino-acid polypeptide reads, in one-letter code: Protein-arginine N-acetylglucosaminyltransferase NleB2 (326 aa).

UDP-N-acetyl-alpha-D-glucosamine contacts are provided by residues 45 to 47 (QWF), Tyr-69, and 216 to 219 (YLDM). A DXD motif motif is present at residues 218 to 220 (DMD). Position 220 (Asp-220) interacts with Mn(2+). The active-site Proton acceptor is the Glu-250. Positions 317 and 319 each coordinate Mn(2+). Residues Ser-319 and 324–326 (SSW) each bind UDP-N-acetyl-alpha-D-glucosamine.

This sequence belongs to the glycosyltransferase NleB family. It depends on Mn(2+) as a cofactor.

The protein localises to the secreted. It is found in the host cell. The catalysed reaction is L-arginyl-[protein] + UDP-N-acetyl-alpha-D-glucosamine = N(omega)-(N-acetyl-beta-D-glucosaminyl)-L-arginyl-[protein] + UDP + H(+). Its function is as follows. Protein-arginine N-acetylglucosaminyltransferase effector that catalyzes the transfer of a single N-acetylglucosamine (GlcNAc) to a conserved arginine residue of host target proteins. In contrast to NleB1, not able to disrupt TNF signaling in infected cells. Shows a lower enzymatic activity than NleB1. This is Protein-arginine N-acetylglucosaminyltransferase NleB2 from Escherichia coli O127:H6 (strain E2348/69 / EPEC).